A 565-amino-acid chain; its full sequence is Arginine--tRNA ligase (565 aa).

The short motif at 121–131 is the 'HIGH' region element; that stretch reads PNIAKPMGMGH.

It belongs to the class-I aminoacyl-tRNA synthetase family. As to quaternary structure, monomer.

It is found in the cytoplasm. The enzyme catalyses tRNA(Arg) + L-arginine + ATP = L-arginyl-tRNA(Arg) + AMP + diphosphate. This Lactobacillus delbrueckii subsp. bulgaricus (strain ATCC BAA-365 / Lb-18) protein is Arginine--tRNA ligase.